Reading from the N-terminus, the 288-residue chain is Oxaloacetate decarboxylase (288 aa).

Ser-47 contributes to the substrate binding site. A Mg(2+)-binding site is contributed by Asp-85. Residues Arg-156 and His-232 each contribute to the substrate site.

It belongs to the isocitrate lyase/PEP mutase superfamily. Oxaloacetate decarboxylase family. Homotetramer; dimer of dimers. Mg(2+) serves as cofactor.

The enzyme catalyses oxaloacetate + H(+) = pyruvate + CO2. Catalyzes the decarboxylation of oxaloacetate into pyruvate. Seems to play a role in maintaining cellular concentrations of bicarbonate and pyruvate. This is Oxaloacetate decarboxylase from Bradyrhizobium diazoefficiens (strain JCM 10833 / BCRC 13528 / IAM 13628 / NBRC 14792 / USDA 110).